The primary structure comprises 352 residues: Organic solute transporter subunit alpha (352 aa).

At 1 to 45 the chain is on the extracellular side; sequence MDVAHPEEVTRFSPDILMEKFNVSEACFLPPPISIQLILQLTWLD. A glycan (N-linked (GlcNAc...) asparagine) is linked at asparagine 22. Residues 46 to 66 form a helical membrane-spanning segment; that stretch reads IGVFAALTAMTVLTIAIYLEI. Topologically, residues 67-82 are cytoplasmic; that stretch reads VCYLMDKVKCPIKRKT. The helical transmembrane segment at 83 to 103 threads the bilayer; that stretch reads LMWNSAAPTVIAITSCLGLWV. Residues 104–108 lie on the Extracellular side of the membrane; sequence PRAIM. A helical transmembrane segment spans residues 109-129; that stretch reads FVDMAAAMYFGVGFYLMLLII. Over 130–173 the chain is Cytoplasmic; sequence VQGYGGEEAMLQHLATHTIRISTGPCCCCCPCLPHIHLTRQKYK. A helical transmembrane segment spans residues 174–194; it reads IFVLGAFQVAFLRPALFLLGV. At 195–210 the chain is on the extracellular side; it reads VLWTNGLYDPDDWSST. A helical transmembrane segment spans residues 211-231; it reads SIFLWLNLFLGVSTILGLWPV. Residues 232–250 are Cytoplasmic-facing; it reads NVLFRHSKVLMADQKLTCK. A helical transmembrane segment spans residues 251–271; it reads FALFQAILILSSLQNSIIGTL. The Extracellular portion of the chain corresponds to 272–294; it reads AGAGHIGCAPPYSARTRGQQMNN. Residues 295–312 traverse the membrane as a helical segment; the sequence is QLLIIEMFFVGILTRISY. Residues 313 to 352 lie on the Cytoplasmic side of the membrane; that stretch reads RKRDDRPGHRHVGEVQQIVRECDQPAIADQQADHSSISHI.

This sequence belongs to the OST-alpha family. Interacts with slc51b. The Ost-alpha/Ost-beta complex is a heterodimer composed of alpha (slc51a) and beta (slc51b) subunit. Expressed in liver.

Its subcellular location is the cell membrane. It is found in the endoplasmic reticulum membrane. The enzyme catalyses taurocholate(out) = taurocholate(in). It carries out the reaction prostaglandin E2(out) = prostaglandin E2(in). It catalyses the reaction estrone 3-sulfate(out) = estrone 3-sulfate(in). The catalysed reaction is dehydroepiandrosterone 3-sulfate(out) = dehydroepiandrosterone 3-sulfate(in). The enzyme catalyses tauroursodeoxycholate(out) = tauroursodeoxycholate(in). It carries out the reaction glycoursodeoxycholate(out) = glycoursodeoxycholate(in). It catalyses the reaction glycocholate(out) = glycocholate(in). The catalysed reaction is taurochenodeoxycholate(out) = taurochenodeoxycholate(in). The enzyme catalyses glycochenodeoxycholate(out) = glycochenodeoxycholate(in). It carries out the reaction taurodeoxycholate(out) = taurodeoxycholate(in). It catalyses the reaction glycodeoxycholate(out) = glycodeoxycholate(in). Its function is as follows. Essential component of the Ost-alpha/Ost-beta complex, a heterodimer that acts as the intestinal basolateral transporter responsible for the translocation of bile acids (such as taurocholate), steroids (such as estrone sulfate), and eicosanoids (such as prostaglandin E2). This Leucoraja erinaceus (Little skate) protein is Organic solute transporter subunit alpha (slc51a).